Reading from the N-terminus, the 430-residue chain is Alpha-humulene synthase asR6 (430 aa).

This sequence belongs to the terpene synthase family. Alpha-humulene synthase eupE subfamily. It depends on Mg(2+) as a cofactor.

It carries out the reaction (2E,6E)-farnesyl diphosphate = alpha-humulene + diphosphate. It participates in secondary metabolite biosynthesis; terpenoid biosynthesis. In terms of biological role, alpha-humulene synthase; part of the gene cluster that mediates the biosynthesis of xenovulene A, an unusual meroterpenoid that has potent inhibitory effects on the human gamma-aminobutyrate A (GABAA) benzodiazepine receptor. The first step of xenovulene A biosynthesis is the biosynthesis of 3-methylorcinaldehyde performed by the non-reducing polyketide synthase aspks1. The salicylate hydroxylase asL1 then catalyzes the oxidative dearomatization of 3-methylorcinaldehyde to yield a dearomatized hydroxycyclohexadione. The 2-oxoglutarate-dependent dioxygenase asL3 further catalyzes the oxidative ring expansion to provide the first tropolone metabolite. The cytochrome P450 monooxygenase asR2 allows the synthesis of tropolone hemiacetal. In parallel, a previously unrecognised class of terpene cyclase, asR6, produces alpha-humulene from farnesylpyrophosphate (FPP). The putative Diels-Alderase asR5 probably catalyzes the formation of the tropolone-humulene skeleton by linking humulene and the polyketide moiety. Oxidative-ring contractions catalyzed by asL4 and asL6 then processively remove carbon atoms from the polyketide to yield xenovulene A. The chain is Alpha-humulene synthase asR6 from Sarocladium schorii (Acremonium strictum (strain IMI 501407)).